Reading from the N-terminus, the 424-residue chain is Inhibin beta A chain (424 aa).

The signal sequence occupies residues 1–20 (MPLLWLRGFLLASCWIIVRS). The propeptide occupies 21–308 (SPTPGSGGHS…EEHPHRRRRR (288 aa)). Asn165 carries an N-linked (GlcNAc...) asparagine glycan. Disordered regions lie at residues 178–197 (QQRR…DVGF) and 259–306 (KKKK…HRRR). The span at 188–197 (AGEEAEDVGF) shows a compositional bias: acidic residues. The segment covering 263–275 (KEEEAEGRKRDGE) has biased composition (basic and acidic residues). 4 cysteine pairs are disulfide-bonded: Cys312/Cys320, Cys319/Cys389, Cys348/Cys421, and Cys352/Cys423.

The protein belongs to the TGF-beta family. As to quaternary structure, dimeric, linked by one or more disulfide bonds. Inhibin A is a dimer of alpha/INHA and beta-A/INHBA. Activin A is a homodimer of beta-A/INHBA. Activin AB is a dimer of beta-A/INHBA and beta-B/INHBB. Interacts with FST and FSTL3; these interactions prevent activin A interaction to its type II receptor. Activin A interacts with ACVR2A. Activin A interacts with BMPR2. Inhibin A interacts with ACVR1; this interaction creates a non-signaling complex (NSC) that inhibits ACVR1-mediated BMP signaling. Inhibin A interacts with ACVR2A.

Its subcellular location is the secreted. Its function is as follows. Inhibins/activins are involved in regulating a number of diverse functions such as hypothalamic and pituitary hormone secretion, gonadal hormone secretion, germ cell development and maturation, erythroid differentiation, insulin secretion, nerve cell survival, embryonic axial development or bone growth, depending on their subunit composition. Activin A is a homodimer of INHBA that plays a role in several essential biological processes including embryonic development, stem cell maintenance and differentiation, haematopoiesis, cell proliferation and tissue fibrosis. Signals through type I (such as ACVR1B or ACVR1C) and type II receptors (such as ACVR2A, ACVR2B or BMPR2) which, upon ligand binding, phosphorylate SMAD2 and SMAD3 intracellular signaling mediators that form a complex with SMAD4, translocate to the nucleus and modulate gene expression. Can also activate alternative non-canonical intracellular signaling pathways including the p38 MAPK, extracellular signal-regulated kinases 1/2 (ERK1/2) and c-Jun N-terminal kinases (JNKs) to modulate cell migration and differentiation. Alternatively, promotes osteoblastic differentiation via ACVRL1-SMAD1/5/9 pathway. In addition, can engage the type I receptor ACVR1 to form an ACVR1-activin A-type II receptor non-signaling complex (NSC) that renders receptors unavailable for engagement with BMPs, hence resulting in an apparent inhibition of ACVR1-mediated BMP signaling. In terms of biological role, inhibin A is a dimer of alpha/INHA and beta-A/INHBA that functions as a feedback regulator in the hypothalamic-pituitary-gonadal (HPG) axis. Inhibits the secretion of FSH from the anterior pituitary gland by acting on pituitary gonadotrope cells. Antagonizes activin A by binding to the proteoglycan, betaglycan, and forming a stable complex with and, thereby, sequestering type II activin receptors while excluding type I receptor. The protein is Inhibin beta A chain (INHBA) of Sus scrofa (Pig).